A 445-amino-acid chain; its full sequence is DNA primase DnaG (445 aa).

Residues 166–252 (DAIVVVEGRS…SVEDLSRSEV (87 aa)) form the Toprim domain. Residues E172, D214, and D216 each contribute to the Mg(2+) site. Residues 276–355 (EEMSQAGEST…NGDGPTIPSL (80 aa)) form a disordered region. Positions 284-298 (STTADGGAVAAATSD) are enriched in low complexity. Residues 303-313 (NQPSPSSQTGS) show a composition bias toward polar residues. Over residues 324–337 (SVVDNSNATAVADA) the composition is skewed to low complexity.

This sequence belongs to the archaeal DnaG primase family. In terms of assembly, forms a ternary complex with MCM helicase and DNA. Mg(2+) is required as a cofactor.

The catalysed reaction is ssDNA + n NTP = ssDNA/pppN(pN)n-1 hybrid + (n-1) diphosphate.. Functionally, RNA polymerase that catalyzes the synthesis of short RNA molecules used as primers for DNA polymerase during DNA replication. In Haloarcula marismortui (strain ATCC 43049 / DSM 3752 / JCM 8966 / VKM B-1809) (Halobacterium marismortui), this protein is DNA primase DnaG.